Consider the following 89-residue polypeptide: Small ribosomal subunit protein uS15 (89 aa).

This sequence belongs to the universal ribosomal protein uS15 family. In terms of assembly, part of the 30S ribosomal subunit. Forms a bridge to the 50S subunit in the 70S ribosome, contacting the 23S rRNA.

In terms of biological role, one of the primary rRNA binding proteins, it binds directly to 16S rRNA where it helps nucleate assembly of the platform of the 30S subunit by binding and bridging several RNA helices of the 16S rRNA. Its function is as follows. Forms an intersubunit bridge (bridge B4) with the 23S rRNA of the 50S subunit in the ribosome. The sequence is that of Small ribosomal subunit protein uS15 from Chlorobium phaeovibrioides (strain DSM 265 / 1930) (Prosthecochloris vibrioformis (strain DSM 265)).